A 78-amino-acid chain; its full sequence is Omega-conotoxin-like VnMKLT1-0111 (78 aa).

The first 22 residues, 1–22, serve as a signal peptide directing secretion; sequence MKLTCMMIVAVLFLTAWTFVTA. The propeptide occupies 23-48; that stretch reads DSRNGLEYLFPKAHYEMNPEASKLNK. 3 disulfide bridges follow: Cys52–Cys69, Cys59–Cys73, and Cys68–Cys77.

It belongs to the conotoxin O1 superfamily. As to expression, expressed by the venom duct.

It localises to the secreted. In terms of biological role, omega-conotoxins act at presynaptic membranes, they bind and block voltage-gated calcium channels (Cav). This is Omega-conotoxin-like VnMKLT1-0111 from Conus ventricosus (Mediterranean cone).